A 189-amino-acid chain; its full sequence is Respiratory supercomplex factor 1, mitochondrial (189 aa).

The HIG1 domain maps to 6 to 97 (LPSSFDDDPD…TERDQRKQLE (92 aa)). Transmembrane regions (helical) follow at residues 33–49 (PLVPLGIGATCYALFRA) and 64–86 (MFRARIYAQAFTLLAVCAGSVYY). The stretch at 86-122 (YKTERDQRKQLEKAMDLKKQQAKRDAWLKELEIREQE) forms a coiled coil. A disordered region spans residues 142–189 (VKPFVADSAPDAAGRDASEEPAKESGDKKDGGSGGVLSAVKNLSWGSK). The span at 154–172 (AGRDASEEPAKESGDKKDG) shows a compositional bias: basic and acidic residues.

Belongs to the RCF1 family. In terms of assembly, associates with the respiratory chain complex III/complex IV supercomplex.

The protein resides in the mitochondrion membrane. Cytochrome c oxidase subunit which plays a role in assembly of respiratory supercomplexes. This chain is Respiratory supercomplex factor 1, mitochondrial (RCF1), found in Trichophyton verrucosum (strain HKI 0517).